A 444-amino-acid polypeptide reads, in one-letter code: Glycine receptor subunit alphaZ1 (444 aa).

The signal sequence occupies residues 1–24 (MFALGIYLWETIVFFSLAASQQAA). The Extracellular portion of the chain corresponds to 25 to 246 (ARKAASPMPP…RFHLERQMGY (222 aa)). N-linked (GlcNAc...) asparagine glycosylation occurs at Asn-62. Glycine is bound by residues Arg-89 and Ser-153. Cysteines 162 and 176 form a disulfide. The Zn(2+) site is built by Glu-216 and Asp-218. A disulfide bond links Cys-222 and Cys-233. Residue 226–231 (YNTGKF) coordinates strychnine. Thr-228 provides a ligand contact to glycine. Zn(2+) is bound at residue His-239. A helical membrane pass occupies residues 247–268 (YLIQMYIPSLLIVILSWVSFWI). At 269–273 (NMDAA) the chain is on the cytoplasmic side. A helical membrane pass occupies residues 274 to 294 (PARVGLGITTVLTMTTQSSGS). Topologically, residues 295–305 (RASLPKVSYVK) are extracellular. Residues 306–326 (AIDIWMAVCLLFVFSALLEYA) form a helical membrane-spanning segment. At 327-412 (AVNFIARQHK…FISRAKRIDT (86 aa)) the chain is on the cytoplasmic side. The helical transmembrane segment at 413–433 (VSRVAFPLVFLIFNIFYWITY) threads the bilayer. Topologically, residues 434–444 (KIIRSEDIHKQ) are extracellular.

The protein belongs to the ligand-gated ion channel (TC 1.A.9) family. Glycine receptor (TC 1.A.9.3) subfamily. GLRA1 sub-subfamily. Homopentamer (in vitro). Heteropentamer composed of glra1 and glrb. Both homopentamers and heteropentamers form functional ion channels. Interacts with glrb. Expressed in brain.

The protein resides in the postsynaptic cell membrane. Its subcellular location is the synapse. It localises to the perikaryon. The protein localises to the cell projection. It is found in the dendrite. The protein resides in the cell membrane. It carries out the reaction chloride(in) = chloride(out). Its activity is regulated as follows. Activated by glycine and taurine. Inhibited by strychnine. Allosterically activated by ivermectin. Inhibited by picrotoxinin. Strychnine binding locks the channel in a closed conformation and prevents channel opening in response to extracellular glycine. Can also be activated by GABA and inhibited by bicuculline, but this requires heterologous expression in human cells. Subunit of heteromeric glycine-gated chloride channels. Plays an important role in the down-regulation of neuronal excitability. Contributes to the generation of inhibitory postsynaptic currents. Channel activity is potentiated by ethanol. This is Glycine receptor subunit alphaZ1 (glra1) from Danio rerio (Zebrafish).